Reading from the N-terminus, the 300-residue chain is Succinate--CoA ligase [ADP-forming] subunit alpha (300 aa).

CoA contacts are provided by residues 17 to 20 (TGST), lysine 43, and 96 to 98 (ITE). Tyrosine 159 serves as a coordination point for substrate. Histidine 247 (tele-phosphohistidine intermediate) is an active-site residue.

This sequence belongs to the succinate/malate CoA ligase alpha subunit family. In terms of assembly, heterotetramer of two alpha and two beta subunits.

The enzyme catalyses succinate + ATP + CoA = succinyl-CoA + ADP + phosphate. The catalysed reaction is GTP + succinate + CoA = succinyl-CoA + GDP + phosphate. Its pathway is carbohydrate metabolism; tricarboxylic acid cycle; succinate from succinyl-CoA (ligase route): step 1/1. Its function is as follows. Succinyl-CoA synthetase functions in the citric acid cycle (TCA), coupling the hydrolysis of succinyl-CoA to the synthesis of either ATP or GTP and thus represents the only step of substrate-level phosphorylation in the TCA. The alpha subunit of the enzyme binds the substrates coenzyme A and phosphate, while succinate binding and nucleotide specificity is provided by the beta subunit. This is Succinate--CoA ligase [ADP-forming] subunit alpha from Bacillus subtilis (strain 168).